A 546-amino-acid polypeptide reads, in one-letter code: Probable malate:quinone oxidoreductase (546 aa).

It belongs to the MQO family. FAD serves as cofactor.

The catalysed reaction is (S)-malate + a quinone = a quinol + oxaloacetate. Its pathway is carbohydrate metabolism; tricarboxylic acid cycle; oxaloacetate from (S)-malate (quinone route): step 1/1. This Acinetobacter baumannii (strain AB0057) protein is Probable malate:quinone oxidoreductase.